The following is a 414-amino-acid chain: Esterase FrsA (414 aa).

Belongs to the FrsA family.

It catalyses the reaction a carboxylic ester + H2O = an alcohol + a carboxylate + H(+). Functionally, catalyzes the hydrolysis of esters. The chain is Esterase FrsA from Escherichia coli O139:H28 (strain E24377A / ETEC).